A 325-amino-acid chain; its full sequence is Glycerol-3-phosphate dehydrogenase [NAD(P)+] (325 aa).

Residues Ser-14, Phe-15, Arg-35, and Lys-109 each coordinate NADPH. Sn-glycerol 3-phosphate is bound by residues Lys-109 and Gly-137. Ala-141 is an NADPH binding site. Residues Lys-192, Asp-247, Ser-257, Arg-258, and Asn-259 each contribute to the sn-glycerol 3-phosphate site. Lys-192 (proton acceptor) is an active-site residue. Residue Arg-258 coordinates NADPH. Residues Leu-282 and Glu-284 each coordinate NADPH.

This sequence belongs to the NAD-dependent glycerol-3-phosphate dehydrogenase family.

It is found in the cytoplasm. It catalyses the reaction sn-glycerol 3-phosphate + NAD(+) = dihydroxyacetone phosphate + NADH + H(+). It carries out the reaction sn-glycerol 3-phosphate + NADP(+) = dihydroxyacetone phosphate + NADPH + H(+). It functions in the pathway membrane lipid metabolism; glycerophospholipid metabolism. Catalyzes the reduction of the glycolytic intermediate dihydroxyacetone phosphate (DHAP) to sn-glycerol 3-phosphate (G3P), the key precursor for phospholipid synthesis. In Rickettsia conorii (strain ATCC VR-613 / Malish 7), this protein is Glycerol-3-phosphate dehydrogenase [NAD(P)+].